Consider the following 677-residue polypeptide: Transketolase 1 (677 aa).

Residue H27 participates in substrate binding. Thiamine diphosphate contacts are provided by residues H66 and 114–116; that span reads GPL. D155 contacts Mg(2+). Thiamine diphosphate-binding residues include G156 and N185. Residues N185 and I187 each contribute to the Mg(2+) site. Substrate contacts are provided by H261, R356, and S383. Thiamine diphosphate is bound at residue H261. E415 and F442 together coordinate thiamine diphosphate. E415 serves as the catalytic Proton donor. Positions 466, 474, and 525 each coordinate substrate.

Belongs to the transketolase family. In terms of assembly, homodimer. Mg(2+) is required as a cofactor. Requires Ca(2+) as cofactor. It depends on Mn(2+) as a cofactor. Co(2+) serves as cofactor. The cofactor is thiamine diphosphate.

It catalyses the reaction D-sedoheptulose 7-phosphate + D-glyceraldehyde 3-phosphate = aldehydo-D-ribose 5-phosphate + D-xylulose 5-phosphate. Functionally, catalyzes the transfer of a two-carbon ketol group from a ketose donor to an aldose acceptor, via a covalent intermediate with the cofactor thiamine pyrophosphate. The polypeptide is Transketolase 1 (TKT1) (Candida albicans (Yeast)).